A 288-amino-acid chain; its full sequence is CBY1-interacting BAR domain-containing protein 2 (288 aa).

Positions 6-217 (SRDSQVRVME…ESYDLEKDLE (212 aa)) are BAR-like. Disordered regions lie at residues 133–157 (QKSP…VDAS) and 256–288 (TIRS…RLNQ). A compositionally biased stretch (polar residues) spans 138–157 (DRQTISQAETSVQRASVDAS). A compositionally biased stretch (acidic residues) spans 266–276 (SEDDSAEEDPV).

Belongs to the CIBAR family. As to quaternary structure, homodimer (via BAR-like domain). Heterodimer (via BAR-like domain) with FAM92A. Interacts with CBY1.

The protein resides in the cytoplasm. Its subcellular location is the cytoskeleton. The protein localises to the microtubule organizing center. It localises to the centrosome. It is found in the centriole. The protein resides in the cilium basal body. May play a role in ciliogenesis. In cooperation with CBY1 may facilitate ciliogenesis likely by the recruitment and fusion of endosomal vesicles at distal appendages during early stages of ciliogenesis. The chain is CBY1-interacting BAR domain-containing protein 2 (CIBAR2) from Bos taurus (Bovine).